Reading from the N-terminus, the 252-residue chain is Imidazole glycerol phosphate synthase subunit HisF (252 aa).

Residues Asp11 and Asp130 contribute to the active site.

It belongs to the HisA/HisF family. In terms of assembly, heterodimer of HisH and HisF.

It localises to the cytoplasm. It carries out the reaction 5-[(5-phospho-1-deoxy-D-ribulos-1-ylimino)methylamino]-1-(5-phospho-beta-D-ribosyl)imidazole-4-carboxamide + L-glutamine = D-erythro-1-(imidazol-4-yl)glycerol 3-phosphate + 5-amino-1-(5-phospho-beta-D-ribosyl)imidazole-4-carboxamide + L-glutamate + H(+). Its pathway is amino-acid biosynthesis; L-histidine biosynthesis; L-histidine from 5-phospho-alpha-D-ribose 1-diphosphate: step 5/9. In terms of biological role, IGPS catalyzes the conversion of PRFAR and glutamine to IGP, AICAR and glutamate. The HisF subunit catalyzes the cyclization activity that produces IGP and AICAR from PRFAR using the ammonia provided by the HisH subunit. The polypeptide is Imidazole glycerol phosphate synthase subunit HisF (Bacillus cereus (strain Q1)).